Here is a 570-residue protein sequence, read N- to C-terminus: Sulfite reductase [NADPH] hemoprotein beta-component (570 aa).

The [4Fe-4S] cluster site is built by cysteine 434, cysteine 440, cysteine 479, and cysteine 483. Cysteine 483 contacts siroheme.

This sequence belongs to the nitrite and sulfite reductase 4Fe-4S domain family. Alpha(8)-beta(8). The alpha component is a flavoprotein, the beta component is a hemoprotein. Siroheme is required as a cofactor. [4Fe-4S] cluster serves as cofactor.

The catalysed reaction is hydrogen sulfide + 3 NADP(+) + 3 H2O = sulfite + 3 NADPH + 4 H(+). The protein operates within sulfur metabolism; hydrogen sulfide biosynthesis; hydrogen sulfide from sulfite (NADPH route): step 1/1. Its function is as follows. Component of the sulfite reductase complex that catalyzes the 6-electron reduction of sulfite to sulfide. This is one of several activities required for the biosynthesis of L-cysteine from sulfate. This is Sulfite reductase [NADPH] hemoprotein beta-component from Salmonella newport (strain SL254).